Here is a 178-residue protein sequence, read N- to C-terminus: Large ribosomal subunit protein bL25 (178 aa).

Belongs to the bacterial ribosomal protein bL25 family. CTC subfamily. As to quaternary structure, part of the 50S ribosomal subunit; part of the 5S rRNA/L5/L18/L25 subcomplex. Contacts the 5S rRNA. Binds to the 5S rRNA independently of L5 and L18.

In terms of biological role, this is one of the proteins that binds to the 5S RNA in the ribosome where it forms part of the central protuberance. This chain is Large ribosomal subunit protein bL25, found in Campylobacter lari (strain RM2100 / D67 / ATCC BAA-1060).